The sequence spans 147 residues: 3-dehydroquinate dehydratase (147 aa).

Residue tyrosine 23 is the Proton acceptor of the active site. The substrate site is built by asparagine 75, histidine 81, and aspartate 88. The active-site Proton donor is the histidine 101. Residues 102–103 (LS) and arginine 112 each bind substrate.

The protein belongs to the type-II 3-dehydroquinase family. In terms of assembly, homododecamer.

The enzyme catalyses 3-dehydroquinate = 3-dehydroshikimate + H2O. The protein operates within metabolic intermediate biosynthesis; chorismate biosynthesis; chorismate from D-erythrose 4-phosphate and phosphoenolpyruvate: step 3/7. Functionally, catalyzes a trans-dehydration via an enolate intermediate. The sequence is that of 3-dehydroquinate dehydratase from Stutzerimonas stutzeri (strain A1501) (Pseudomonas stutzeri).